We begin with the raw amino-acid sequence, 157 residues long: Cell cycle regulator of non-homologous end joining (157 aa).

Methionine 1 carries the N-acetylmethionine modification. Positions 1–21 match the KBM motif; sequence METLKSKTKTRVLPSWMTAPV. The span at 80-91 shows a compositional bias: basic and acidic residues; it reads KPWEQRSLEATD. Residues 80-148 are disordered; that stretch reads KPWEQRSLEA…EEEKEEEDAL (69 aa). Low complexity predominate over residues 96–106; the sequence is SPPCSSSPGSS. Positions 147-157 match the XLM motif; sequence ALKYVREIFFS.

Interacts (via KBM motif) with XRCC5/Ku80 and XRCC6/Ku70 heterodimer. Interacts (via XLF motif) with TRIM28/KAP1, ATM, MRE11, NBN and RAD50. Interacts with splicing factor SF3B1. Interacts with ERCC6L2; this interaction is DNA independent.

The protein resides in the cytoplasm. It is found in the nucleus. It localises to the chromosome. Functionally, cell-cycle-specific regulator of classical non-homologous end joining (NHEJ) of DNA double-strand break (DSB) repair, which can act both as an activator or inhibitor of NHEJ, depending on the cell cycle phase. Acts as a regulator of DNA repair pathway choice by specifically inhibiting classical NHEJ during the S and G2 phases, thereby promoting error-free repair by homologous recombination during cell cycle phases when sister chromatids are present. Preferentially protects single-stranded overhangs at break sites by inhibiting classical NHEJ, thereby creating a local environment that favors homologous recombination. Acts via interaction with XRCC5/Ku80 and XRCC6/Ku70. In contrast, acts as an activator of NHEJ during G1 phase of the cell cycle: promotes classical NHEJ in G1 phase cells via multivalent interactions that increase the affinity of DNA damage response proteins for DSB-associated chromatin. Also involved in immunoglobulin V(D)J recombination. May also act as an indirect regulator of proteasome. This chain is Cell cycle regulator of non-homologous end joining, found in Mus musculus (Mouse).